The primary structure comprises 451 residues: ADP-specific phosphofructokinase (451 aa).

Residues 1–450 enclose the ADPK domain; it reads MSVPQDVSIF…FITYVNYLKR (450 aa). Mg(2+) is bound by residues E261, E291, and D434. Residue D434 is the Proton acceptor of the active site.

It belongs to the carbohydrate kinase PfkC family. Mg(2+) serves as cofactor.

It is found in the cytoplasm. The catalysed reaction is beta-D-fructose 6-phosphate + ADP = beta-D-fructose 1,6-bisphosphate + AMP + H(+). It participates in carbohydrate degradation; glycolysis. Catalyzes the phosphorylation of fructose 6-phosphate to fructose 1,6-bisphosphate using ADP as the phosphate donor. The polypeptide is ADP-specific phosphofructokinase (Pyrococcus abyssi (strain GE5 / Orsay)).